We begin with the raw amino-acid sequence, 112 residues long: FK506-binding protein 1A (112 aa).

Positions 20–108 (GDFVTIHYTG…IFEVELLGIN (89 aa)) constitute a PPIase FKBP-type domain.

The protein belongs to the FKBP-type PPIase family. FKBP1 subfamily.

It localises to the cytoplasm. The catalysed reaction is [protein]-peptidylproline (omega=180) = [protein]-peptidylproline (omega=0). Inhibited by both FK506 and rapamycin. PPIases accelerate the folding of proteins. It catalyzes the cis-trans isomerization of proline imidic peptide bonds in oligopeptides. The protein is FK506-binding protein 1A (fpr1A) of Aspergillus fumigatus (strain ATCC MYA-4609 / CBS 101355 / FGSC A1100 / Af293) (Neosartorya fumigata).